A 1196-amino-acid polypeptide reads, in one-letter code: Major DNA-binding protein (1196 aa).

A zinc finger spans residues 499–512; the sequence is CNLCTFDTRHACVH. 2 consecutive short sequence motifs (required for filament formation) follow at residues 843 to 844 and 1142 to 1144; these read FW and FNF. The interval 1158-1196 is disordered; it reads GGPGAPGPAFAGRKRAFHGDDPFGEGPPDKKGDLTLDML. Positions 1170–1196 are required for nuclear localization; it reads RKRAFHGDDPFGEGPPDKKGDLTLDML. The span at 1174–1196 shows a compositional bias: basic and acidic residues; the sequence is FHGDDPFGEGPPDKKGDLTLDML.

It belongs to the herpesviridae major DNA-binding protein family. In terms of assembly, homooligomers. Forms double-helical filaments necessary for the formation of replication compartments within the host nucleus. Interacts with the origin-binding protein. Interacts with the helicase primase complex; this interaction stimulates primer synthesis activity of the helicase-primase complex. Interacts with the DNA polymerase. Interacts with the alkaline exonuclease; this interaction increases its nuclease processivity.

It is found in the host nucleus. Functionally, plays several crucial roles in viral infection. Participates in the opening of the viral DNA origin to initiate replication by interacting with the origin-binding protein. May disrupt loops, hairpins and other secondary structures present on ssDNA to reduce and eliminate pausing of viral DNA polymerase at specific sites during elongation. Promotes viral DNA recombination by performing strand-transfer, characterized by the ability to transfer a DNA strand from a linear duplex to a complementary single-stranded DNA circle. Can also catalyze the renaturation of complementary single strands. Additionally, reorganizes the host cell nucleus, leading to the formation of prereplicative sites and replication compartments. This process is driven by the protein which can form double-helical filaments in the absence of DNA. The polypeptide is Major DNA-binding protein (Homo sapiens (Human)).